Here is a 451-residue protein sequence, read N- to C-terminus: MNLEVKKIDTANARLSAKLSIENLEKRYDKIAQKIAQKVKIDGFRRGKVPLSLVKTRYQAQIEQDAQEEMIQEVLKNAFKELGIENKDLIGSPNLTKFEKKDTHFEIEADIGLKPTIVLDKIKECVPSVGVEIPNEEKINERLKQLAKDYAKFVDTDAQRKAQNDDKLTIDFEGFIDNAPFEGGKAENFNLILGSKQMLEDFEKALLGMQAGEEKEFPLTFPSGYHAEHLAGKEALFKVKLHQIQAREALEINDELAKIVLANEENATLKLLKERVEGQLFLENKARLYNEELKEKLIENLDEKIVFDLPKTIIEQEMDLLFRNALYSMQAEEVKSLQESQEKAKEKRESFRNDATKSVKITFIIDALAKEEKIGVHDNEVFQTLYYEAMMTGQNPENLIEQYRKNNMLAAVKMAMIEDRVLAYLLDKNLPKEQQEILEKMRPNAQKIQAG.

Residues D165–L250 enclose the PPIase FKBP-type domain.

This sequence belongs to the FKBP-type PPIase family. Tig subfamily.

Its subcellular location is the cytoplasm. It catalyses the reaction [protein]-peptidylproline (omega=180) = [protein]-peptidylproline (omega=0). In terms of biological role, involved in protein export. Acts as a chaperone by maintaining the newly synthesized protein in an open conformation. Functions as a peptidyl-prolyl cis-trans isomerase. This chain is Trigger factor, found in Helicobacter pylori (strain HPAG1).